The primary structure comprises 214 residues: Adenylate kinase (214 aa).

An ATP-binding site is contributed by 10–15 (GAGKGT). Residues 30 to 59 (STGDIFRANIKGNTPLGQKAKEYMDKGELV) form an NMP region. AMP-binding positions include Thr31, Arg36, 57 to 59 (ELV), 85 to 88 (GFPR), and Gln92. The LID stretch occupies residues 126–163 (GRRVCTNCGATYNVVFNPTKVEGICDVCNSPVIQRADD). Arg127 contributes to the ATP binding site. Zn(2+) is bound by residues Cys130 and Cys133. 136–137 (TY) provides a ligand contact to ATP. Cys150 and Cys153 together coordinate Zn(2+). Arg160 and Arg171 together coordinate AMP. Position 199 (Gly199) interacts with ATP.

It belongs to the adenylate kinase family. As to quaternary structure, monomer.

It localises to the cytoplasm. It catalyses the reaction AMP + ATP = 2 ADP. Its pathway is purine metabolism; AMP biosynthesis via salvage pathway; AMP from ADP: step 1/1. Its function is as follows. Catalyzes the reversible transfer of the terminal phosphate group between ATP and AMP. Plays an important role in cellular energy homeostasis and in adenine nucleotide metabolism. The polypeptide is Adenylate kinase (Ruminiclostridium cellulolyticum (strain ATCC 35319 / DSM 5812 / JCM 6584 / H10) (Clostridium cellulolyticum)).